A 200-amino-acid polypeptide reads, in one-letter code: MLAFCRSSLKSKKYFIILLALAAIAGLGTHAAWSSNGLPRIDNKTLARLAQQHPVVVLFRHAERCDRSTNQCLSDKTGITVKGTQDARELGNAFSADIPDFDLYSSNTVRTIQSATWFSAGKKLTVDKRLLQCGNEIYSAIKDLQSKAPDKNIVIFTHNHCLTYIAKDKRDATFKPDYLDGLVMHVEKGKVYLDGEFVNH.

The signal sequence occupies residues 1-25 (MLAFCRSSLKSKKYFIILLALAAIA).

It belongs to the phosphoglycerate mutase family. Ais subfamily.

It is found in the periplasm. Its pathway is bacterial outer membrane biogenesis; lipopolysaccharide metabolism. In terms of biological role, catalyzes the dephosphorylation of heptose(II) of the outer membrane lipopolysaccharide core. In Escherichia coli O17:K52:H18 (strain UMN026 / ExPEC), this protein is Lipopolysaccharide core heptose(II)-phosphate phosphatase.